The primary structure comprises 291 residues: Lipoyl synthase (291 aa).

Residues C35, C40, C46, C61, C65, C68, and S273 each coordinate [4Fe-4S] cluster. The 216-residue stretch at F47–E262 folds into the Radical SAM core domain.

The protein belongs to the radical SAM superfamily. Lipoyl synthase family. The cofactor is [4Fe-4S] cluster.

It localises to the cytoplasm. The catalysed reaction is [[Fe-S] cluster scaffold protein carrying a second [4Fe-4S](2+) cluster] + N(6)-octanoyl-L-lysyl-[protein] + 2 oxidized [2Fe-2S]-[ferredoxin] + 2 S-adenosyl-L-methionine + 4 H(+) = [[Fe-S] cluster scaffold protein] + N(6)-[(R)-dihydrolipoyl]-L-lysyl-[protein] + 4 Fe(3+) + 2 hydrogen sulfide + 2 5'-deoxyadenosine + 2 L-methionine + 2 reduced [2Fe-2S]-[ferredoxin]. It participates in protein modification; protein lipoylation via endogenous pathway; protein N(6)-(lipoyl)lysine from octanoyl-[acyl-carrier-protein]: step 2/2. Functionally, catalyzes the radical-mediated insertion of two sulfur atoms into the C-6 and C-8 positions of the octanoyl moiety bound to the lipoyl domains of lipoate-dependent enzymes, thereby converting the octanoylated domains into lipoylated derivatives. The chain is Lipoyl synthase from Citrifermentans bemidjiense (strain ATCC BAA-1014 / DSM 16622 / JCM 12645 / Bem) (Geobacter bemidjiensis).